Here is a 515-residue protein sequence, read N- to C-terminus: Membrane-bound lytic murein transglycosylase F (515 aa).

An N-terminal signal peptide occupies residues 1 to 32; sequence MKKLKINYLFIGILTLLLAAALWPSIPWFGKA. A non-LT domain region spans residues 33 to 269; that stretch reads DNRIAAIQSR…RMEEKYLGHG (237 aa). An LT domain region spans residues 270 to 515; the sequence is DDFDYVDTRT…PFSLKKKDEN (246 aa). Glu-314 is a catalytic residue. The tract at residues 493 to 515 is disordered; sequence QPSSNYLSHSPSLPFSLKKKDEN.

It in the N-terminal section; belongs to the bacterial solute-binding protein 3 family. The protein in the C-terminal section; belongs to the transglycosylase Slt family.

Its subcellular location is the cell outer membrane. The catalysed reaction is Exolytic cleavage of the (1-&gt;4)-beta-glycosidic linkage between N-acetylmuramic acid (MurNAc) and N-acetylglucosamine (GlcNAc) residues in peptidoglycan, from either the reducing or the non-reducing ends of the peptidoglycan chains, with concomitant formation of a 1,6-anhydrobond in the MurNAc residue.. Murein-degrading enzyme that degrades murein glycan strands and insoluble, high-molecular weight murein sacculi, with the concomitant formation of a 1,6-anhydromuramoyl product. Lytic transglycosylases (LTs) play an integral role in the metabolism of the peptidoglycan (PG) sacculus. Their lytic action creates space within the PG sacculus to allow for its expansion as well as for the insertion of various structures such as secretion systems and flagella. The chain is Membrane-bound lytic murein transglycosylase F from Citrobacter koseri (strain ATCC BAA-895 / CDC 4225-83 / SGSC4696).